A 186-amino-acid chain; its full sequence is Casparian strip membrane protein 6 (186 aa).

The Cytoplasmic segment spans residues 1 to 23; that stretch reads MKAGPIELGEGKSSAPKAAVNRG. A helical membrane pass occupies residues 24 to 44; that stretch reads VAILDFILRILAFIGTLGSAI. Over 45 to 73 the chain is Extracellular; that stretch reads SMATTNETLPFFTQFIRFRAEYDDLPTFT. Asn-50 is a glycosylation site (N-linked (GlcNAc...) asparagine). The chain crosses the membrane as a helical span at residues 74–94; that stretch reads FFVVANGVVSAYLLFSLPFSI. Topologically, residues 95–106 are cytoplasmic; it reads FNIVRSKAQNSR. The helical transmembrane segment at 107–127 threads the bilayer; sequence ILLIILDTAMLGLLSAGASAA. Residues 128–160 are Extracellular-facing; that stretch reads AAIVYLAHQGNVRTNWSAICQQFNSFCERISGS. Residue Asn-142 is glycosylated (N-linked (GlcNAc...) asparagine). A helical transmembrane segment spans residues 161 to 181; the sequence is LIGSFIGVVVFILLISLSAVA. The Cytoplasmic portion of the chain corresponds to 182 to 186; the sequence is LSRHK.

Belongs to the Casparian strip membrane proteins (CASP) family. As to quaternary structure, homodimer and heterodimers.

Its subcellular location is the cell membrane. Its function is as follows. Regulates membrane-cell wall junctions and localized cell wall deposition. Required for establishment of the Casparian strip membrane domain (CSD) and the subsequent formation of Casparian strips, a cell wall modification of the root endodermis that determines an apoplastic barrier between the intraorganismal apoplasm and the extraorganismal apoplasm and prevents lateral diffusion. This chain is Casparian strip membrane protein 6, found in Populus trichocarpa (Western balsam poplar).